The sequence spans 820 residues: Catenin beta (820 aa).

Residues 1–16 (MEQARYSNQQSVNPQQ) are compositionally biased toward polar residues. The interval 1–74 (MEQARYSNQQ…SRHEDGGEEA (74 aa)) is disordered. Over residues 52 to 63 (SSATSHPPSVSS) the composition is skewed to low complexity. ARM repeat units lie at residues 157 to 196 (NYQDDADLATRAIPELTKLLNDDDLVVVNQAAMMVHQLSK), 199 to 239 (ASRH…NLSH), 241 to 280 (RAGLLQIFKSGGIPALIKLLSSPVESVLFYAITTLHNLLL), 283 to 322 (EGSKMAVRLAGGLQKMVALLSRNNPKFLAITTDCLQILAY), 367 to 405 (HNNKPAIVEAGGMSALGLHLGHHSNRLVQNCLWTLRNLS), 406 to 445 (DCHRGTDDIEPLLQMLVQLLASNDINVVTCACGILSNLTC), 448 to 489 (SRNK…HVTS), 495 to 535 (EMGQ…NLAL), 603 to 642 (SHNRALIQGLNCIPLFVQLLYNNIENIQRVAAGVLSELSL), and 644 to 683 (KQGAEMIEQEGATAPLTELLHSRNEGVATYAAAVLYRMSD). The interval 708-811 (PWGDPLDMPS…LDSIPPADNT (104 aa)) is disordered. The segment covering 785-796 (GMDPGLPDMGPP) has biased composition (low complexity).

This sequence belongs to the beta-catenin family.

The protein resides in the cytoplasm. It localises to the cytoskeleton. In terms of biological role, binds to the cytoplasmic domain of the cell-cell adhesion molecule E-cadherin, and perhaps to other (membrane) proteins. The association of catenins to cadherins produces a complex which is linked to the actin filament network, and which seems to be of primary importance for cadherins cell-adhesion properties. The protein is Catenin beta of Tripneustes gratilla (Hawaian sea urchin).